A 979-amino-acid polypeptide reads, in one-letter code: Glycine dehydrogenase (decarboxylating) (979 aa).

K726 carries the post-translational modification N6-(pyridoxal phosphate)lysine.

The protein belongs to the GcvP family. The glycine cleavage system is composed of four proteins: P, T, L and H. Pyridoxal 5'-phosphate is required as a cofactor.

It carries out the reaction N(6)-[(R)-lipoyl]-L-lysyl-[glycine-cleavage complex H protein] + glycine + H(+) = N(6)-[(R)-S(8)-aminomethyldihydrolipoyl]-L-lysyl-[glycine-cleavage complex H protein] + CO2. In terms of biological role, the glycine cleavage system catalyzes the degradation of glycine. The P protein binds the alpha-amino group of glycine through its pyridoxal phosphate cofactor; CO(2) is released and the remaining methylamine moiety is then transferred to the lipoamide cofactor of the H protein. This chain is Glycine dehydrogenase (decarboxylating), found in Ralstonia pickettii (strain 12J).